The following is a 557-amino-acid chain: Large cysteine-rich periplasmic protein omcB (557 aa).

A signal peptide spans 1–22; that stretch reads MSKLIRRVVTVLALTSMASSFA. The propeptide occupies 23–40; it reads SGKIEAAAAESLATRFIA.

In terms of assembly, part of a disulfide cross-linked outer membrane complex (COMC) composed of the major outer membrane porin (MOMP), the small cysteine-rich protein (omcA) and the large cysteine-rich periplasmic protein (omcB).

It localises to the periplasm. Functionally, in elementary bodies (EBs, the infectious stage, which is able to survive outside the host cell) provides the structural integrity of the outer envelope through disulfide cross-links with the small cysteine-rich protein and the major outer membrane porin. It has been described in publications as the Sarkosyl-insoluble COMC (Chlamydia outer membrane complex), and serves as the functional equivalent of peptidoglycan. The sequence is that of Large cysteine-rich periplasmic protein omcB (omcB) from Chlamydia psittaci (Chlamydophila psittaci).